Here is an 848-residue protein sequence, read N- to C-terminus: Xylosyltransferase (848 aa).

The Cytoplasmic portion of the chain corresponds to 1-14 (MSLHRTLRRFLRKW). A helical; Signal-anchor for type II membrane protein transmembrane segment spans residues 15 to 35 (KALVYAVSFILLIQAFFTFQS). Topologically, residues 36 to 843 (SPNLMEEEHL…PKTELISVKP (808 aa)) are lumenal. 4 disulfide bridges follow: cysteine 145-cysteine 173, cysteine 189-cysteine 427, cysteine 446-cysteine 459, and cysteine 448-cysteine 457. UDP-alpha-D-xylose contacts are provided by residues valine 219, aspartate 247, and 276–278 (TIW). Asparagine 306 carries an N-linked (GlcNAc...) asparagine glycan. 379 to 380 (DW) lines the UDP-alpha-D-xylose pocket. UDP-alpha-D-xylose is bound by residues serine 460 and 482 to 483 (RK). 2 cysteine pairs are disulfide-bonded: cysteine 529–cysteine 811 and cysteine 794–cysteine 822. N-linked (GlcNAc...) asparagine glycosylation is present at asparagine 530. The interval 824 to 848 (NTNWSSLSPDPKTELISVKPDGRIR) is disordered. N-linked (GlcNAc...) asparagine glycosylation is present at asparagine 826.

It belongs to the glycosyltransferase 14 family. XylT subfamily. It depends on a divalent metal cation as a cofactor.

The protein resides in the endoplasmic reticulum membrane. The protein localises to the golgi apparatus membrane. The enzyme catalyses UDP-alpha-D-xylose + L-seryl-[protein] = 3-O-(beta-D-xylosyl)-L-seryl-[protein] + UDP + H(+). It functions in the pathway glycan metabolism; chondroitin sulfate biosynthesis. The protein operates within glycan metabolism; heparan sulfate biosynthesis. Catalyzes the first step in biosynthesis of glycosaminoglycan. Transfers D-xylose from UDP-D-xylose to specific serine residues of the core protein. Initial enzyme in the biosynthesis of chondroitin sulfate and dermatan sulfate proteoglycans in fibroblasts and chondrocytes. The chain is Xylosyltransferase (xt) from Ciona intestinalis (Transparent sea squirt).